The following is a 783-amino-acid chain: MGFSQAIRLNLASFSSPSPCDYCLTRVVNHKQKSLVAFPSITRRKRHLLLSVQSVLHNTRPNINDNGSAESANVLFDKLFARTHRLERQTNQHSVYPDDDDLPYSNLGVLESDLEAALVALLKREEDLHDAERKLLSDKNKLNRAKEELEKREKTISEASLKHESLQEELKRANVELASQAREIEELKHKLRERDEERAALQSSLTLKEEELEKMRQEIANRSKEVSMAISEFESKSQLLSKANEVVKRQEGEIYALQRALEEKEEELEISKATKKLEQEKLRETEANLKKQTEEWLIAQDEVNKLKEETVKRLGEANETMEDFMKVKKLLTDVRFELISSREALVFSREQMEEKELLLEKQLEELEEQRKSVLSYMQSLRDAHTEVESERVKLRVVEAKNFALEREISVQKELLEDLREELQKEKPLLELAMHDISVIQDELYKKANAFQVSQNLLQEKESSLVEAKLEIQHLKSEQASLELLLQEKDEELAEARNKLGEVNQEVTELKALMISREDQLMEATEMLKEKDVHLHRIEGELGSSKLKVTEAEMVVERIAELTNRLLMSTTNGQNQNAMRINNEISIDSMQQPLEKPHDDYGMENKRLVMELSFTRENLRMKEMEVLAVQRALTFKDEEINVVMGRLEAKEQELKKLKEETINDSEDLKVLYALAQERVGEKTMGDLAIEMLQLEAANLEVEAATSALQKLAKMSTELLTQADMSIEADTTHTVMPERGYSEGSNECLGEVKTEVVRLWSLTEKLLENAGIVAGTSTCMEGVIL.

The transit peptide at 1 to 27 (MGFSQAIRLNLASFSSPSPCDYCLTRV) directs the protein to the chloroplast. Coiled-coil stretches lie at residues 128–309 (LHDA…LKEE), 345–432 (LVFS…LELA), and 457–512 (LQEK…LKAL).

In terms of assembly, interacts with PTST2; the interaction is essential for the initiation of starch granules biosynthesis in leaf chloroplasts. Interacts with SS4; the interaction is essential for the initiation of starch granules biosynthesis in leaf chloroplasts.

It is found in the plastid. The protein localises to the chloroplast. Required for the initiation of starch granules biosynthesis in leaf chloroplasts. Involved in determining starch granule number and size in chloroplasts. In Arabidopsis thaliana (Mouse-ear cress), this protein is Protein involved in starch initiation 1.